Consider the following 88-residue polypeptide: Cell division topological specificity factor (88 aa).

The protein belongs to the MinE family.

Its function is as follows. Prevents the cell division inhibition by proteins MinC and MinD at internal division sites while permitting inhibition at polar sites. This ensures cell division at the proper site by restricting the formation of a division septum at the midpoint of the long axis of the cell. The protein is Cell division topological specificity factor of Salmonella agona (strain SL483).